The following is a 177-amino-acid chain: Disulfide bond formation protein B (177 aa).

At 1–14 (MLALLKQFSEKRFV) the chain is on the cytoplasmic side. The chain crosses the membrane as a helical span at residues 15–31 (WFLLAFSSLALESTALY). Over 32–49 (FQYGMGLQPCVLCVYERL) the chain is Periplasmic. A disulfide bridge connects residues Cys41 and Cys44. The helical transmembrane segment at 50–65 (AMIGLFVAGIIALLQP) threads the bilayer. The Cytoplasmic portion of the chain corresponds to 66 to 72 (LAFILRL). The helical transmembrane segment at 73 to 90 (IALALGLFSSIKGLLISF) threads the bilayer. The Periplasmic segment spans residues 91 to 145 (RHLDLQMNPAPWKQCEFIPNFPETLPFHQWFPFIFNPTGSCNESQWSLFGLTMVQ). An intrachain disulfide couples Cys105 to Cys131. A helical membrane pass occupies residues 146 to 164 (WLVVIFSLYVVILTLLLIA). At 165–177 (QVIKTRKQRRLFN) the chain is on the cytoplasmic side.

It belongs to the DsbB family.

The protein resides in the cell inner membrane. Functionally, required for disulfide bond formation in some periplasmic proteins. Acts by oxidizing the DsbA protein. This is Disulfide bond formation protein B from Haemophilus influenzae (strain 86-028NP).